The primary structure comprises 123 residues: Histone H2B (123 aa).

A disordered region spans residues 1-32; it reads MPPKAASKGAKKAASKAKAARSTDKKKRRRRR. The segment covering 9 to 32 has biased composition (basic residues); it reads GAKKAASKAKAARSTDKKKRRRRR. Residue Ser-110 is glycosylated (O-linked (GlcNAc) serine). A Glycyl lysine isopeptide (Lys-Gly) (interchain with G-Cter in ubiquitin) cross-link involves residue Lys-118.

The protein belongs to the histone H2B family. As to quaternary structure, the nucleosome is a histone octamer containing two molecules each of H2A, H2B, H3 and H4 assembled in one H3-H4 heterotetramer and two H2A-H2B heterodimers. The octamer wraps approximately 147 bp of DNA. Post-translationally, monoubiquitination of Lys-118 gives a specific tag for epigenetic transcriptional activation and is also prerequisite for histone H3 'Lys-4' and 'Lys-79' methylation.

Its subcellular location is the nucleus. It localises to the chromosome. Functionally, core component of nucleosome. Nucleosomes wrap and compact DNA into chromatin, limiting DNA accessibility to the cellular machineries which require DNA as a template. Histones thereby play a central role in transcription regulation, DNA repair, DNA replication and chromosomal stability. DNA accessibility is regulated via a complex set of post-translational modifications of histones, also called histone code, and nucleosome remodeling. The sequence is that of Histone H2B from Urechis caupo (Innkeeper worm).